The sequence spans 133 residues: Thioredoxin-2, mitochondrial (133 aa).

The transit peptide at 1 to 29 directs the protein to the mitochondrion; the sequence is MRGFIANSLKPHMRSFALRRSFTSSRILR. In terms of domain architecture, Thioredoxin spans 30 to 133; that stretch reads KVNAVESFGD…LSSLLAKYQE (104 aa). Active-site nucleophile residues include Cys59 and Cys62. An intrachain disulfide couples Cys59 to Cys62.

Belongs to the thioredoxin family. In terms of assembly, interacts with arg3.

The protein localises to the mitochondrion. Functionally, disulfide reductase which serves multiple functions in mitochondria, protecting mitochondrial components against thiol-oxidative damage as a thiol-disulfide oxidoreductase, and supporting urea cycle and respiration in mitochondria in a manner independent of active site thiols. This Schizosaccharomyces pombe (strain 972 / ATCC 24843) (Fission yeast) protein is Thioredoxin-2, mitochondrial (trx2).